The following is a 326-amino-acid chain: Glyoxalase I (326 aa).

2 consecutive VOC domains span residues 22–167 (LLNH…LITY) and 182–322 (KFNH…VVPH). A Zn(2+)-binding site is contributed by H25. Residue R29 participates in substrate binding. E89 contributes to the Zn(2+) binding site. Substrate contacts are provided by residues N93, R113, H117, and 147–148 (RQ). Zn(2+) is bound at residue H117. E163 serves as a coordination point for Zn(2+). Active-site proton donor/acceptor residues include E163 and E318.

Belongs to the glyoxalase I family. Monomer. It depends on Zn(2+) as a cofactor.

The catalysed reaction is (R)-S-lactoylglutathione = methylglyoxal + glutathione. Its pathway is secondary metabolite metabolism; methylglyoxal degradation; (R)-lactate from methylglyoxal: step 1/2. Catalyzes the conversion of hemimercaptal, formed from methylglyoxal and glutathione, to S-lactoylglutathione. Can use gamma-glutamylcysteine as a substrate. In Saccharomyces cerevisiae (strain ATCC 204508 / S288c) (Baker's yeast), this protein is Glyoxalase I.